Consider the following 208-residue polypeptide: Glutathione S-transferase 2 (208 aa).

A GST N-terminal domain is found at 1–78 (MSYKLTYFSI…HLARKYNLNG (78 aa)). Glutathione-binding positions include Y7, K42, 49–50 (QL), and 62–63 (QS). The region spanning 80 to 200 (NEMETTYIDM…YCEKRDAAKV (121 aa)) is the GST C-terminal domain.

It belongs to the GST superfamily. Pi family. Homodimer. In terms of tissue distribution, hypodermis, wall of the seminal receptacle and spermatozoa of adult worms.

It catalyses the reaction RX + glutathione = an S-substituted glutathione + a halide anion + H(+). In terms of biological role, appears to play a central role in the parasite detoxification system. The sequence is that of Glutathione S-transferase 2 (GST2) from Onchocerca volvulus.